Reading from the N-terminus, the 122-residue chain is Large ribosomal subunit protein uL14 (122 aa).

Belongs to the universal ribosomal protein uL14 family. As to quaternary structure, part of the 50S ribosomal subunit. Forms a cluster with proteins L3 and L19. In the 70S ribosome, L14 and L19 interact and together make contacts with the 16S rRNA in bridges B5 and B8.

Its function is as follows. Binds to 23S rRNA. Forms part of two intersubunit bridges in the 70S ribosome. In Paracoccus denitrificans (strain Pd 1222), this protein is Large ribosomal subunit protein uL14.